The following is a 736-amino-acid chain: Eukaryotic translation initiation factor 3 subunit B (736 aa).

Residues 1–94 are sufficient for interaction with HCR1 and TIF32; it reads MAAVFDDIRL…LFIEFEDAGA (94 aa). The sufficient for interaction with PIC8 stretch occupies residues 1–219; the sequence is MAAVFDDIRL…GIASWGGPQF (219 aa). The RRM domain occupies 37 to 120; sequence RYVVVDGAPV…HRLWVNGLDD (84 aa). WD repeat units follow at residues 140–182, 186–224, 226–244, 245–284, 288–328, 332–375, 443–483, 511–557, 566–604, and 616–662; these read EFEA…PENV, RRNW…RLRR, AHPD…YLVT, FSSE…CVKT, PPQQ…QLLG, MKIE…QSCK, EIKD…VSFY, AIDG…TEKI, ATLR…KAEN, and VREE…QDAM.

The protein belongs to the eIF-3 subunit B family. As to quaternary structure, component of the eukaryotic translation initiation factor 3 (eIF-3) complex.

Its subcellular location is the cytoplasm. RNA-binding component of the eukaryotic translation initiation factor 3 (eIF-3) complex, which is involved in protein synthesis of a specialized repertoire of mRNAs and, together with other initiation factors, stimulates binding of mRNA and methionyl-tRNAi to the 40S ribosome. The eIF-3 complex specifically targets and initiates translation of a subset of mRNAs involved in cell proliferation. The protein is Eukaryotic translation initiation factor 3 subunit B of Eremothecium gossypii (strain ATCC 10895 / CBS 109.51 / FGSC 9923 / NRRL Y-1056) (Yeast).